The following is a 347-amino-acid chain: MTQSLLLDAARSKPVARPPVWMMRQAGRYMAEYRALRDKYGFKERCENPDLAVEISLQPFRAFRPDGVIMFSDILTPFDGMGIPFELVESRGPVIDPPIRTREQVEAVRPLDPEASLAFVRTILQTLRREVGEAATVLGFVGAPWTLAAYAVEGKSSKDYALIKQMAFSEPDLLHALLTKFADAIARYVIFQIDSGAQAVQLFDTWAGQLNPADYRAFALPYERRIVEQVRQVHPETPLILYINHSAGLLRHVGESGVDVMSLDWTVDMAEARAILGPDMAVQGNLDPCVLLGDQAQIRSRILDIVEKAGPTGHIMNLGHGILPSTPEDNARFFFETVKSLAPVSAR.

Substrate contacts are provided by residues 24–28 (RQAGR), Phe-42, Asp-73, Tyr-150, Thr-205, and His-320.

The protein belongs to the uroporphyrinogen decarboxylase family. In terms of assembly, homodimer.

The protein resides in the cytoplasm. The enzyme catalyses uroporphyrinogen III + 4 H(+) = coproporphyrinogen III + 4 CO2. It functions in the pathway porphyrin-containing compound metabolism; protoporphyrin-IX biosynthesis; coproporphyrinogen-III from 5-aminolevulinate: step 4/4. In terms of biological role, catalyzes the decarboxylation of four acetate groups of uroporphyrinogen-III to yield coproporphyrinogen-III. This chain is Uroporphyrinogen decarboxylase, found in Gloeobacter violaceus (strain ATCC 29082 / PCC 7421).